Consider the following 394-residue polypeptide: Phosphopentomutase (394 aa).

Residues Asp14, Asp287, His292, Asp328, His329, and His340 each contribute to the Mn(2+) site.

The protein belongs to the phosphopentomutase family. The cofactor is Mn(2+).

It is found in the cytoplasm. The catalysed reaction is 2-deoxy-alpha-D-ribose 1-phosphate = 2-deoxy-D-ribose 5-phosphate. It catalyses the reaction alpha-D-ribose 1-phosphate = D-ribose 5-phosphate. The protein operates within carbohydrate degradation; 2-deoxy-D-ribose 1-phosphate degradation; D-glyceraldehyde 3-phosphate and acetaldehyde from 2-deoxy-alpha-D-ribose 1-phosphate: step 1/2. In terms of biological role, isomerase that catalyzes the conversion of deoxy-ribose 1-phosphate (dRib-1-P) and ribose 1-phosphate (Rib-1-P) to deoxy-ribose 5-phosphate (dRib-5-P) and ribose 5-phosphate (Rib-5-P), respectively. In Listeria welshimeri serovar 6b (strain ATCC 35897 / DSM 20650 / CCUG 15529 / CIP 8149 / NCTC 11857 / SLCC 5334 / V8), this protein is Phosphopentomutase.